Here is a 473-residue protein sequence, read N- to C-terminus: Bifunctional protein GlmU (473 aa).

Residues 1–240 (MAIHPLDVVI…AAQVAGVNSP (240 aa)) form a pyrophosphorylase region. Residues K25, Q83, 88-89 (GT), 110-112 (SGD), G147, E165, and N238 contribute to the UDP-N-acetyl-alpha-D-glucosamine site. D112 contributes to the Mg(2+) binding site. N238 contacts Mg(2+). Positions 241 to 261 (VQLAELERVYQQRLATTLMEQ) are linker. Residues 262–473 (GVRLADPARL…WARPVKKPGV (212 aa)) form an N-acetyltransferase region. The UDP-N-acetyl-alpha-D-glucosamine site is built by R348 and K366. Catalysis depends on H378, which acts as the Proton acceptor. Residues Y381 and N392 each contribute to the UDP-N-acetyl-alpha-D-glucosamine site. Residues A395, 401–402 (NY), S420, G438, and R455 each bind acetyl-CoA.

This sequence in the N-terminal section; belongs to the N-acetylglucosamine-1-phosphate uridyltransferase family. The protein in the C-terminal section; belongs to the transferase hexapeptide repeat family. As to quaternary structure, homotrimer. It depends on Mg(2+) as a cofactor.

The protein localises to the cytoplasm. It catalyses the reaction alpha-D-glucosamine 1-phosphate + acetyl-CoA = N-acetyl-alpha-D-glucosamine 1-phosphate + CoA + H(+). It carries out the reaction N-acetyl-alpha-D-glucosamine 1-phosphate + UTP + H(+) = UDP-N-acetyl-alpha-D-glucosamine + diphosphate. The protein operates within nucleotide-sugar biosynthesis; UDP-N-acetyl-alpha-D-glucosamine biosynthesis; N-acetyl-alpha-D-glucosamine 1-phosphate from alpha-D-glucosamine 6-phosphate (route II): step 2/2. It functions in the pathway nucleotide-sugar biosynthesis; UDP-N-acetyl-alpha-D-glucosamine biosynthesis; UDP-N-acetyl-alpha-D-glucosamine from N-acetyl-alpha-D-glucosamine 1-phosphate: step 1/1. Its pathway is bacterial outer membrane biogenesis; LPS lipid A biosynthesis. Its function is as follows. Catalyzes the last two sequential reactions in the de novo biosynthetic pathway for UDP-N-acetylglucosamine (UDP-GlcNAc). The C-terminal domain catalyzes the transfer of acetyl group from acetyl coenzyme A to glucosamine-1-phosphate (GlcN-1-P) to produce N-acetylglucosamine-1-phosphate (GlcNAc-1-P), which is converted into UDP-GlcNAc by the transfer of uridine 5-monophosphate (from uridine 5-triphosphate), a reaction catalyzed by the N-terminal domain. The sequence is that of Bifunctional protein GlmU from Polaromonas naphthalenivorans (strain CJ2).